Reading from the N-terminus, the 38-residue chain is Allatostatin-C (38 aa).

Residues 1 to 19 (MRRALDGPGSSSLDTRQAD) constitute a propeptide that is removed on maturation. Glutamine 22 carries the post-translational modification Pyrrolidone carboxylic acid; partial.

The protein belongs to the allatostatin family. As to expression, in its non-pyroglutamate form, expressed in antennal lobe (AL), corpora cardiaca (CC), corpora allata (CA) and gnathal ganglion (GNG) with expression in AL detected in most animals and expression in CC, CA and GNG detected in few animals (at protein level). In its pyroglutamate form, expressed in antennal lobe (AL), corpora cardiaca (CC) and corpora allata (CA) with expression detected in few animals (at protein level). Not expressed in GNG (protein level).

The protein localises to the secreted. Its function is as follows. Strongly inhibits juvenile hormone biosynthesis. This chain is Allatostatin-C, found in Agrotis ipsilon (Black cutworm moth).